A 427-amino-acid chain; its full sequence is 3-phosphoshikimate 1-carboxyvinyltransferase (427 aa).

Residues Lys22, Ser23, and Arg27 each contribute to the 3-phosphoshikimate site. Residue Lys22 participates in phosphoenolpyruvate binding. Phosphoenolpyruvate is bound by residues Gly96 and Arg124. 3-phosphoshikimate-binding residues include Ser169, Ser170, Gln171, Ser197, Asp313, Asn336, and Lys340. Position 171 (Gln171) interacts with phosphoenolpyruvate. Asp313 functions as the Proton acceptor in the catalytic mechanism. Phosphoenolpyruvate contacts are provided by Arg344, Arg386, and Lys411.

This sequence belongs to the EPSP synthase family. Monomer.

Its subcellular location is the cytoplasm. The enzyme catalyses 3-phosphoshikimate + phosphoenolpyruvate = 5-O-(1-carboxyvinyl)-3-phosphoshikimate + phosphate. Its pathway is metabolic intermediate biosynthesis; chorismate biosynthesis; chorismate from D-erythrose 4-phosphate and phosphoenolpyruvate: step 6/7. Its function is as follows. Catalyzes the transfer of the enolpyruvyl moiety of phosphoenolpyruvate (PEP) to the 5-hydroxyl of shikimate-3-phosphate (S3P) to produce enolpyruvyl shikimate-3-phosphate and inorganic phosphate. This is 3-phosphoshikimate 1-carboxyvinyltransferase from Escherichia coli O127:H6 (strain E2348/69 / EPEC).